The chain runs to 1373 residues: DNA-directed RNA polymerase subunit beta (1373 aa).

It belongs to the RNA polymerase beta chain family. In terms of assembly, the RNAP catalytic core consists of 2 alpha, 1 beta, 1 beta' and 1 omega subunit. When a sigma factor is associated with the core the holoenzyme is formed, which can initiate transcription.

The catalysed reaction is RNA(n) + a ribonucleoside 5'-triphosphate = RNA(n+1) + diphosphate. DNA-dependent RNA polymerase catalyzes the transcription of DNA into RNA using the four ribonucleoside triphosphates as substrates. This Rickettsia canadensis (strain McKiel) protein is DNA-directed RNA polymerase subunit beta.